A 339-amino-acid chain; its full sequence is UDP-N-acetylglucosamine--N-acetylmuramyl-(pentapeptide) pyrophosphoryl-undecaprenol N-acetylglucosamine transferase (339 aa).

Residues 11–13 (TGG), Asn-127, Arg-170, Ser-188, Ile-235, and Gln-280 each bind UDP-N-acetyl-alpha-D-glucosamine.

This sequence belongs to the glycosyltransferase 28 family. MurG subfamily.

It is found in the cell inner membrane. It carries out the reaction di-trans,octa-cis-undecaprenyl diphospho-N-acetyl-alpha-D-muramoyl-L-alanyl-D-glutamyl-meso-2,6-diaminopimeloyl-D-alanyl-D-alanine + UDP-N-acetyl-alpha-D-glucosamine = di-trans,octa-cis-undecaprenyl diphospho-[N-acetyl-alpha-D-glucosaminyl-(1-&gt;4)]-N-acetyl-alpha-D-muramoyl-L-alanyl-D-glutamyl-meso-2,6-diaminopimeloyl-D-alanyl-D-alanine + UDP + H(+). The protein operates within cell wall biogenesis; peptidoglycan biosynthesis. In terms of biological role, cell wall formation. Catalyzes the transfer of a GlcNAc subunit on undecaprenyl-pyrophosphoryl-MurNAc-pentapeptide (lipid intermediate I) to form undecaprenyl-pyrophosphoryl-MurNAc-(pentapeptide)GlcNAc (lipid intermediate II). In Thermotoga neapolitana (strain ATCC 49049 / DSM 4359 / NBRC 107923 / NS-E), this protein is UDP-N-acetylglucosamine--N-acetylmuramyl-(pentapeptide) pyrophosphoryl-undecaprenol N-acetylglucosamine transferase.